A 231-amino-acid chain; its full sequence is Biosynthetic peptidoglycan transglycosylase (231 aa).

A helical membrane pass occupies residues 7–27 (LLFWLILVPILLVLLMQLYFF).

The protein belongs to the glycosyltransferase 51 family.

The protein resides in the cell inner membrane. It carries out the reaction [GlcNAc-(1-&gt;4)-Mur2Ac(oyl-L-Ala-gamma-D-Glu-L-Lys-D-Ala-D-Ala)](n)-di-trans,octa-cis-undecaprenyl diphosphate + beta-D-GlcNAc-(1-&gt;4)-Mur2Ac(oyl-L-Ala-gamma-D-Glu-L-Lys-D-Ala-D-Ala)-di-trans,octa-cis-undecaprenyl diphosphate = [GlcNAc-(1-&gt;4)-Mur2Ac(oyl-L-Ala-gamma-D-Glu-L-Lys-D-Ala-D-Ala)](n+1)-di-trans,octa-cis-undecaprenyl diphosphate + di-trans,octa-cis-undecaprenyl diphosphate + H(+). It participates in cell wall biogenesis; peptidoglycan biosynthesis. Functionally, peptidoglycan polymerase that catalyzes glycan chain elongation from lipid-linked precursors. The sequence is that of Biosynthetic peptidoglycan transglycosylase from Herminiimonas arsenicoxydans.